Reading from the N-terminus, the 263-residue chain is Cysteine-rich repeat secretory protein 55 (263 aa).

The signal sequence occupies residues 1 to 20 (MKTLVVKCFLLLALVCSCRA). Gnk2-homologous domains are found at residues 22-126 (DSIW…QENF) and 132-240 (TGAG…FYPF).

This sequence belongs to the cysteine-rich repeat secretory protein family.

The protein localises to the secreted. This Arabidopsis thaliana (Mouse-ear cress) protein is Cysteine-rich repeat secretory protein 55 (CRRSP55).